Here is a 292-residue protein sequence, read N- to C-terminus: Probable 2-(5''-triphosphoribosyl)-3'-dephosphocoenzyme-A synthase (292 aa).

It belongs to the CitG/MdcB family.

The catalysed reaction is 3'-dephospho-CoA + ATP = 2'-(5''-triphospho-alpha-D-ribosyl)-3'-dephospho-CoA + adenine. This is Probable 2-(5''-triphosphoribosyl)-3'-dephosphocoenzyme-A synthase from Shigella boydii serotype 18 (strain CDC 3083-94 / BS512).